Reading from the N-terminus, the 116-residue chain is Putative pterin-4-alpha-carbinolamine dehydratase (116 aa).

Belongs to the pterin-4-alpha-carbinolamine dehydratase family.

The catalysed reaction is (4aS,6R)-4a-hydroxy-L-erythro-5,6,7,8-tetrahydrobiopterin = (6R)-L-erythro-6,7-dihydrobiopterin + H2O. In Xylella fastidiosa (strain 9a5c), this protein is Putative pterin-4-alpha-carbinolamine dehydratase.